Reading from the N-terminus, the 148-residue chain is UPF0208 membrane protein HD_1715 (148 aa).

Helical transmembrane passes span 41 to 60 and 66 to 88; these read AARFMPIFACFAILWQYFFT and ILANAIITSLFAISLPYQGLYWL.

The protein belongs to the UPF0208 family.

Its subcellular location is the cell inner membrane. This is UPF0208 membrane protein HD_1715 from Haemophilus ducreyi (strain 35000HP / ATCC 700724).